The chain runs to 132 residues: Large ribosomal subunit protein bL17 (132 aa).

This sequence belongs to the bacterial ribosomal protein bL17 family. In terms of assembly, part of the 50S ribosomal subunit. Contacts protein L32.

This chain is Large ribosomal subunit protein bL17, found in Variovorax paradoxus (strain S110).